The chain runs to 83 residues: UPF0248 protein PH1212.1 (83 aa).

It belongs to the UPF0248 family.

The polypeptide is UPF0248 protein PH1212.1 (Pyrococcus horikoshii (strain ATCC 700860 / DSM 12428 / JCM 9974 / NBRC 100139 / OT-3)).